The sequence spans 1171 residues: Structural maintenance of chromosomes protein 2-2 (1171 aa).

The 1157-residue stretch at 2–1158 (HIKEICLEGF…DVLFRTKFVD (1157 aa)) folds into the Zinc-hook domain. Position 32 to 39 (32 to 39 (GLNGSGKS)) interacts with ATP. The stretch at 172–510 (RMYENKKEAA…LANVQFTYRD (339 aa)) forms a coiled coil. In terms of domain architecture, SMC hinge spans 518–635 (SKVKGVVAKL…KTTDAAKEVA (118 aa)). Residues 674-1026 (HDLAEAETKF…LDEKKKETLK (353 aa)) adopt a coiled-coil conformation.

The protein belongs to the SMC family. SMC2 subfamily. As to quaternary structure, forms a heterodimer with SMC4. Component of the condensin complex, which contains the SMC2 and SMC4 heterodimer, and three non SMC subunits that probably regulate the complex: CAPH, CAPD2 and CAPG. Highly expressed in roots and young floral buds.

It is found in the nucleus. Functionally, central component of the condensin complex, a complex required for conversion of interphase chromatin into mitotic-like condense chromosomes. The condensin complex probably introduces positive supercoils into relaxed DNA in the presence of type I topoisomerases and converts nicked DNA into positive knotted forms in the presence of type II topoisomerases. Also involved in chromosome segregation in meiosis. This chain is Structural maintenance of chromosomes protein 2-2 (SMC2-2), found in Arabidopsis thaliana (Mouse-ear cress).